The sequence spans 124 residues: MSITRYTKDHEYIRVEGETGTVGITDYAQSQLGDVVFVELPAIGKALTKGGEAAVVESVKAASEIYAPVSGEVVAVNEALAEAPGTVNEDAAGKGWFLQIKLADAKELDGLMDEAGYQDFLKTL.

In terms of domain architecture, Lipoyl-binding spans 19-101 (TGTVGITDYA…AGKGWFLQIK (83 aa)). Residue Lys60 is modified to N6-lipoyllysine.

The protein belongs to the GcvH family. In terms of assembly, the glycine cleavage system is composed of four proteins: P, T, L and H. (R)-lipoate serves as cofactor.

The glycine cleavage system catalyzes the degradation of glycine. The H protein shuttles the methylamine group of glycine from the P protein to the T protein. The sequence is that of Glycine cleavage system H protein from Beijerinckia indica subsp. indica (strain ATCC 9039 / DSM 1715 / NCIMB 8712).